Reading from the N-terminus, the 1888-residue chain is E3 ubiquitin-protein ligase UPL3 (1888 aa).

The segment covering methionine 1–glutamate 10 has biased composition (basic and acidic residues). A disordered region spans residues methionine 1 to serine 157. Positions leucine 41–serine 81 are enriched in low complexity. The span at asparagine 97–leucine 124 shows a compositional bias: basic and acidic residues. The segment covering aspartate 137–aspartate 146 has biased composition (acidic residues). ARM repeat units lie at residues glutamate 227–aspartate 267, proline 270–glutamine 310, histidine 312–lysine 349, and leucine 351–glutamate 390. Disordered regions lie at residues lysine 660–asparagine 711, alanine 970–cysteine 1119, aspartate 1134–alanine 1157, and arginine 1280–glutamine 1307. A compositionally biased stretch (low complexity) spans proline 986–threonine 1002. The segment covering threonine 1019–glycine 1029 has biased composition (basic and acidic residues). Over residues serine 1076–aspartate 1113 the composition is skewed to acidic residues. Composition is skewed to low complexity over residues alanine 1148–alanine 1157 and alanine 1286–serine 1303. Residues alanine 1377 to glycine 1451 are K-box. Residues methionine 1490–serine 1888 enclose the HECT domain. Residue cysteine 1855 is the Glycyl thioester intermediate of the active site.

Belongs to the UPL family. K-HECT subfamily. Widely expressed.

It catalyses the reaction S-ubiquitinyl-[E2 ubiquitin-conjugating enzyme]-L-cysteine + [acceptor protein]-L-lysine = [E2 ubiquitin-conjugating enzyme]-L-cysteine + N(6)-ubiquitinyl-[acceptor protein]-L-lysine.. It participates in protein modification; protein ubiquitination. Functionally, probable E3 ubiquitin-protein ligase which mediates ubiquitination and subsequent proteasomal degradation of target proteins. Involved in the repression of endoreduplication process and the cell morphogenesis in the trichomes. This is E3 ubiquitin-protein ligase UPL3 (UPL3) from Arabidopsis thaliana (Mouse-ear cress).